The primary structure comprises 122 residues: Large ribosomal subunit protein uL14 (122 aa).

This sequence belongs to the universal ribosomal protein uL14 family. In terms of assembly, part of the 50S ribosomal subunit. Forms a cluster with proteins L3 and L19. In the 70S ribosome, L14 and L19 interact and together make contacts with the 16S rRNA in bridges B5 and B8.

In terms of biological role, binds to 23S rRNA. Forms part of two intersubunit bridges in the 70S ribosome. This Christiangramia forsetii (strain DSM 17595 / CGMCC 1.15422 / KT0803) (Gramella forsetii) protein is Large ribosomal subunit protein uL14.